A 273-amino-acid chain; its full sequence is Putative phosphoenolpyruvate synthase regulatory protein (273 aa).

153 to 160 (AVSRAGKT) lines the ADP pocket.

It belongs to the pyruvate, phosphate/water dikinase regulatory protein family. PSRP subfamily.

It catalyses the reaction [pyruvate, water dikinase] + ADP = [pyruvate, water dikinase]-phosphate + AMP + H(+). It carries out the reaction [pyruvate, water dikinase]-phosphate + phosphate + H(+) = [pyruvate, water dikinase] + diphosphate. Functionally, bifunctional serine/threonine kinase and phosphorylase involved in the regulation of the phosphoenolpyruvate synthase (PEPS) by catalyzing its phosphorylation/dephosphorylation. In Xanthomonas campestris pv. campestris (strain 8004), this protein is Putative phosphoenolpyruvate synthase regulatory protein.